A 257-amino-acid polypeptide reads, in one-letter code: Anamorsin homolog (257 aa).

Residues 1–132 (MSVLALDVAR…ARGTAFALKS (132 aa)) are N-terminal SAM-like domain. Positions 133–171 (RAVRVNATAADAADAWGASAAADDDELIDESALLTELDV) are linker. Residues C181, C190, C193, and C195 each coordinate [2Fe-2S] cluster. The tract at residues 181 to 195 (CDVGAGKKACKNCTC) is fe-S binding site A. The [4Fe-4S] cluster site is built by C219, C222, C230, and C233. 2 short sequence motifs (cx2C motif) span residues 219–222 (CGNC) and 230–233 (CAGC). Positions 219-233 (CGNCALGDAFRCAGC) are fe-S binding site B.

It belongs to the anamorsin family. In terms of assembly, monomer. It depends on [2Fe-2S] cluster as a cofactor. Requires [4Fe-4S] cluster as cofactor.

Its subcellular location is the cytoplasm. The protein localises to the mitochondrion intermembrane space. In terms of biological role, component of the cytosolic iron-sulfur (Fe-S) protein assembly (CIA) machinery. Required for the maturation of extramitochondrial Fe-S proteins. Part of an electron transfer chain functioning in an early step of cytosolic Fe-S biogenesis, facilitating the de novo assembly of a [4Fe-4S] cluster on the cytosolic Fe-S scaffold complex. Electrons are transferred from NADPH via a FAD- and FMN-containing diflavin oxidoreductase. Together with the diflavin oxidoreductase, also required for the assembly of the diferric tyrosyl radical cofactor of ribonucleotide reductase (RNR), probably by providing electrons for reduction during radical cofactor maturation in the catalytic small subunit. This is Anamorsin homolog from Ostreococcus lucimarinus (strain CCE9901).